Consider the following 591-residue polypeptide: Tricyclene synthase, chloroplastic (591 aa).

Residues 1–45 (MATLLQIGSGVIYSNALRKTLRRPQSSTCIIVTETTPCNKSPTVQ) constitute a chloroplast transit peptide. Positions 302, 339, 343, 481, and 484 each coordinate (2E)-geranyl diphosphate. Residues Asp339 and Asp343 each coordinate Mg(2+). The DDXXD motif motif lies at 339-343 (DDIYD). Residues Asn484, Thr488, and Glu492 each coordinate Mg(2+).

Belongs to the terpene synthase family. Tpsb subfamily. The cofactor is Mg(2+). It depends on Mn(2+) as a cofactor. As to expression, predominantly expressed in flowers but also in leaves, siliques and in stems.

The protein resides in the plastid. The protein localises to the chloroplast stroma. It catalyses the reaction (2E)-geranyl diphosphate = beta-myrcene + diphosphate. The enzyme catalyses (2E)-geranyl diphosphate = tricyclene + diphosphate. The catalysed reaction is (2E)-geranyl diphosphate = (E)-beta-ocimene + diphosphate. Its pathway is secondary metabolite biosynthesis; terpenoid biosynthesis. Its function is as follows. Involved in monoterpene (C10) biosynthesis. The major product is beta-myrcene (56%) followed by (E)-beta-ocimene (20%) and minor amounts (less than 5%) of the cyclic monoterpene (-)-limonene, (+)-limonene, 2-carene and tricyclene. This is Tricyclene synthase, chloroplastic from Arabidopsis thaliana (Mouse-ear cress).